A 205-amino-acid chain; its full sequence is Ribonuclease HII (205 aa).

The RNase H type-2 domain maps to 14 to 201 (EIVAGVDEAG…KGNINHSAIL (188 aa)). A divalent metal cation contacts are provided by aspartate 20, glutamate 21, and aspartate 111.

Belongs to the RNase HII family. Requires Mn(2+) as cofactor. Mg(2+) is required as a cofactor.

It is found in the cytoplasm. The enzyme catalyses Endonucleolytic cleavage to 5'-phosphomonoester.. Its function is as follows. Endonuclease that specifically degrades the RNA of RNA-DNA hybrids. This Orientia tsutsugamushi (strain Boryong) (Rickettsia tsutsugamushi) protein is Ribonuclease HII.